Reading from the N-terminus, the 261-residue chain is uncharacterized protein (261 aa).

2 helical membrane-spanning segments follow: residues 4–21 and 33–55; these read RLIA…LIVL and FSIL…LVLF.

Its subcellular location is the cell membrane. This is an uncharacterized protein from Archaeoglobus fulgidus (strain ATCC 49558 / DSM 4304 / JCM 9628 / NBRC 100126 / VC-16).